Here is a 257-residue protein sequence, read N- to C-terminus: Enterotoxin type A (257 aa).

The first 27 residues, M1 to K27, serve as a signal peptide directing secretion. C120 and C130 form a disulfide bridge. Residues H211, H249, and D251 each contribute to the Zn(2+) site.

This sequence belongs to the staphylococcal/streptococcal toxin family. In terms of assembly, monomer. Interacts with MHC class II molecules alpha/HLA-DRB1 and beta/HLA-DRA chains. The interaction with MHC-II molecules occurs at both zinc-dependent and zinc-independent sites. Interacts with T-cell receptor beta variable 7-9/TRBV7-9. The cofactor is Zn(2+).

The protein resides in the secreted. In terms of biological role, staphylococcal enterotoxin that activates the host immune system by binding as unprocessed molecules to major histocompatibility (MHC) complex class II and T-cell receptor (TCR) molecules. In turn, waves of cellular activation, cytokine production, and migration into the lung tissue and airways occur via alphabeta T-cells. Also causes the intoxication staphylococcal food poisoning syndrome. The illness is characterized by high fever, hypotension, diarrhea, shock, and in some cases death. The chain is Enterotoxin type A (sea) from Staphylococcus aureus (strain Newman).